A 430-amino-acid polypeptide reads, in one-letter code: Adenylosuccinate synthetase (430 aa).

GTP contacts are provided by residues 11-17 and 39-41; these read GDEGKGK and GHT. The Proton acceptor role is filled by Asp-12. Mg(2+) is bound by residues Asp-12 and Gly-39. IMP-binding positions include 12 to 15, 37 to 40, Thr-130, Arg-144, Asn-226, Thr-241, and Arg-305; these read DEGK and NAGH. The active-site Proton donor is the His-40. Position 301–307 (301–307) interacts with substrate; it reads VTTGRKR. Residues Arg-307, 333–335, and 415–417 contribute to the GTP site; these read KLD and GTG.

It belongs to the adenylosuccinate synthetase family. In terms of assembly, homodimer. The cofactor is Mg(2+).

It localises to the cytoplasm. The catalysed reaction is IMP + L-aspartate + GTP = N(6)-(1,2-dicarboxyethyl)-AMP + GDP + phosphate + 2 H(+). Its pathway is purine metabolism; AMP biosynthesis via de novo pathway; AMP from IMP: step 1/2. In terms of biological role, plays an important role in the de novo pathway and in the salvage pathway of purine nucleotide biosynthesis. Catalyzes the first committed step in the biosynthesis of AMP from IMP. The sequence is that of Adenylosuccinate synthetase from Scheffersomyces stipitis (strain ATCC 58785 / CBS 6054 / NBRC 10063 / NRRL Y-11545) (Yeast).